The sequence spans 192 residues: HTH-type transcriptional regulator Hpr (192 aa).

The region spanning 12–156 is the HTH marR-type domain; the sequence is SIIFSHKFAQ…LLSIVRHVYG (145 aa). The segment at residues 62–85 is a DNA-binding region (H-T-H motif); the sequence is ISDIAKFGVMHVSTAFNFSKKLEE.

As to quaternary structure, homodimer.

Functionally, negative regulator of protease production and sporulation. This Halalkalibacterium halodurans (strain ATCC BAA-125 / DSM 18197 / FERM 7344 / JCM 9153 / C-125) (Bacillus halodurans) protein is HTH-type transcriptional regulator Hpr.